Consider the following 105-residue polypeptide: Antithrombin-III (105 aa).

Positions 1-17 (MHLFIGVSLRPLGHGIP) are cleaved as a signal peptide. The interval 38-105 (ICIYRNPEKK…MRRTSSCRPS (68 aa)) is disordered. Over residues 43–53 (NPEKKPQERRG) the composition is skewed to basic and acidic residues.

The protein belongs to the serpin family. In terms of assembly, forms protease inhibiting heterodimer with TMPRSS7. In terms of tissue distribution, plasma.

It is found in the secreted. Its subcellular location is the extracellular space. Most important serine protease inhibitor in plasma that regulates the blood coagulation cascade. AT-III inhibits thrombin, matriptase-3/TMPRSS7, as well as factors IXa, Xa and XIa. Its inhibitory activity is greatly enhanced in the presence of heparin. This Gallus gallus (Chicken) protein is Antithrombin-III (SERPINC1).